A 343-amino-acid chain; its full sequence is N-acetyl-gamma-glutamyl-phosphate reductase (343 aa).

Cysteine 147 is an active-site residue.

The protein belongs to the NAGSA dehydrogenase family. Type 1 subfamily.

Its subcellular location is the cytoplasm. It catalyses the reaction N-acetyl-L-glutamate 5-semialdehyde + phosphate + NADP(+) = N-acetyl-L-glutamyl 5-phosphate + NADPH + H(+). It participates in amino-acid biosynthesis; L-arginine biosynthesis; N(2)-acetyl-L-ornithine from L-glutamate: step 3/4. Its function is as follows. Catalyzes the NADPH-dependent reduction of N-acetyl-5-glutamyl phosphate to yield N-acetyl-L-glutamate 5-semialdehyde. The polypeptide is N-acetyl-gamma-glutamyl-phosphate reductase (Listeria monocytogenes serotype 4a (strain HCC23)).